The chain runs to 2254 residues: Acetyl-CoA carboxylase 1 (2254 aa).

In terms of domain architecture, Biotin carboxylation spans proline 36–alanine 543. Residues asparagine 189–methionine 381 form the ATP-grasp domain. Cysteine 215–leucine 272 contacts ATP. Residues glutamate 338, glutamate 352, and asparagine 354 each coordinate Mg(2+). 3 residues coordinate Mn(2+): glutamate 338, glutamate 352, and asparagine 354. Residue arginine 356 is part of the active site. One can recognise a Biotinyl-binding domain in the interval leucine 670 to aspartate 744. At lysine 711 the chain carries N6-biotinyllysine. Threonine 1031 bears the Phosphothreonine mark. A Phosphoserine modification is found at serine 1192. The CoA carboxyltransferase N-terminal domain maps to glutamine 1492–alanine 1831. The carboxyltransferase stretch occupies residues glutamine 1492 to glutamate 2150. 3 residues coordinate CoA: arginine 1740, lysine 2041, and arginine 2043. The CoA carboxyltransferase C-terminal domain occupies proline 1835 to glutamate 2150.

Homodimer. Biotin is required as a cofactor. It depends on Mg(2+) as a cofactor. The cofactor is Mn(2+). As to expression, expressed in roots, trichomes, epidermal leaf cells, siliques, petals, anthers, and seeds.

The protein localises to the cytoplasm. Its subcellular location is the cytosol. The enzyme catalyses hydrogencarbonate + acetyl-CoA + ATP = malonyl-CoA + ADP + phosphate + H(+). It catalyses the reaction N(6)-biotinyl-L-lysyl-[protein] + hydrogencarbonate + ATP = N(6)-carboxybiotinyl-L-lysyl-[protein] + ADP + phosphate + H(+). The protein operates within lipid metabolism; malonyl-CoA biosynthesis; malonyl-CoA from acetyl-CoA: step 1/1. Multifunctional enzyme that catalyzes the carboxylation of acetyl-CoA, forming malonyl-CoA, which is used in the plastid for fatty acid synthesis and in the cytosol in various biosynthetic pathways including fatty acid elongation. Required for very long chain fatty acids elongation. Necessary for embryo and plant development. Plays a central function in embryo morphogenesis, especially in apical meristem development. Involved in cell proliferation and tissue patterning. May act as a repressor of cytokinin response. The sequence is that of Acetyl-CoA carboxylase 1 (ACC1) from Arabidopsis thaliana (Mouse-ear cress).